A 249-amino-acid polypeptide reads, in one-letter code: MARHLPFLLDADPTAPFPPAAQALRDPDGLLAIGGDLAPQRLLNAYAHGIFPWFSQDQPILWWSPDPRMVFRTDALRLSSRFRRQLRSSSWTVRADTAFEQVIDACASVPRAGQDGTWITAQMQQAYIALHELGHAHSLEVFDGTRLVGGIYGVAIGQMFFGESMFSAQSGGSKVALAALAMHLHTEGWPLLDAQVENPHLLSLGAQRLPRAQFLQQVQLQVARPALPGTWSGRYGQRPASSLGEARLT.

This sequence belongs to the L/F-transferase family.

The protein localises to the cytoplasm. The enzyme catalyses N-terminal L-lysyl-[protein] + L-leucyl-tRNA(Leu) = N-terminal L-leucyl-L-lysyl-[protein] + tRNA(Leu) + H(+). The catalysed reaction is N-terminal L-arginyl-[protein] + L-leucyl-tRNA(Leu) = N-terminal L-leucyl-L-arginyl-[protein] + tRNA(Leu) + H(+). It carries out the reaction L-phenylalanyl-tRNA(Phe) + an N-terminal L-alpha-aminoacyl-[protein] = an N-terminal L-phenylalanyl-L-alpha-aminoacyl-[protein] + tRNA(Phe). In terms of biological role, functions in the N-end rule pathway of protein degradation where it conjugates Leu, Phe and, less efficiently, Met from aminoacyl-tRNAs to the N-termini of proteins containing an N-terminal arginine or lysine. The polypeptide is Leucyl/phenylalanyl-tRNA--protein transferase (Xanthomonas axonopodis pv. citri (strain 306)).